The chain runs to 207 residues: LexA repressor (207 aa).

Residues 33–52 (VKEMSETFGISHASVHDRIN) constitute a DNA-binding region (H-T-H motif). Catalysis depends on for autocatalytic cleavage activity residues Ser129 and Lys166.

This sequence belongs to the peptidase S24 family. In terms of assembly, homodimer.

It carries out the reaction Hydrolysis of Ala-|-Gly bond in repressor LexA.. In terms of biological role, represses a number of genes involved in the response to DNA damage (SOS response), including recA and lexA. In the presence of single-stranded DNA, RecA interacts with LexA causing an autocatalytic cleavage which disrupts the DNA-binding part of LexA, leading to derepression of the SOS regulon and eventually DNA repair. The sequence is that of LexA repressor from Oleidesulfovibrio alaskensis (strain ATCC BAA-1058 / DSM 17464 / G20) (Desulfovibrio alaskensis).